The following is a 466-amino-acid chain: Citrate synthase, mitochondrial (466 aa).

The N-terminal 27 residues, 1-27, are a transit peptide targeting the mitochondrion; sequence MALLTAAARLLGTKNASCLVLAARHAS. The SIFI-degron signature appears at 2-21; it reads ALLTAAARLLGTKNASCLVL. The residue at position 57 (lysine 57) is an N6-succinyllysine. N6-acetyllysine; alternate is present on lysine 76. Lysine 76 is subject to N6-succinyllysine; alternate. Residues lysine 103 and lysine 193 each carry the N6-succinyllysine modification. The active site involves histidine 301. N6-acetyllysine; alternate is present on residues lysine 321 and lysine 327. An N6-succinyllysine; alternate mark is found at lysine 321 and lysine 327. The active site involves histidine 347. Position 356 (arginine 356) interacts with oxaloacetate. The residue at position 375 (lysine 375) is an N6-acetyllysine; alternate. N6-succinyllysine; alternate is present on lysine 375. Lysine 382 is modified (N6-acetyllysine). An N6-acetyllysine; alternate modification is found at lysine 393. Lysine 393 is subject to N6-succinyllysine; alternate. N6,N6,N6-trimethyllysine is present on lysine 395. The active site involves aspartate 402. Oxaloacetate contacts are provided by arginine 428 and arginine 448. Lysine 450 is subject to N6-succinyllysine. Lysine 459 carries the post-translational modification N6-acetyllysine; alternate. An N6-succinyllysine; alternate modification is found at lysine 459.

This sequence belongs to the citrate synthase family. As to quaternary structure, homodimer. Methylated. Trimethylation at Lys-395 by CSKMT decreases citrate synthase activity. In terms of processing, in response to mitochondrial stress, the precursor protein is ubiquitinated by the SIFI complex in the cytoplasm before mitochondrial import, leading to its degradation. Within the SIFI complex, UBR4 initiates ubiquitin chain that are further elongated or branched by KCMF1.

It is found in the mitochondrion matrix. It carries out the reaction oxaloacetate + acetyl-CoA + H2O = citrate + CoA + H(+). It functions in the pathway carbohydrate metabolism; tricarboxylic acid cycle; isocitrate from oxaloacetate: step 1/2. Its function is as follows. Key enzyme of the Krebs tricarboxylic acid cycle which catalyzes the synthesis of citrate from acetyl coenzyme A and oxaloacetate. The chain is Citrate synthase, mitochondrial (CS) from Homo sapiens (Human).